A 2731-amino-acid chain; its full sequence is MEQTDCKPYQPLSKVKHEMDLAYTSSSDESEDGRKPRQSFNSRETLHEYNQELRRNYNSQSRKRKDVEKSTQEIEFCETPPTLCSGYHTDMHSVSRHGYQLEMGSDVDTETEGAASPDHALRMWIRGMKSEHSSCLSSRANSALSLTDTDHERKSDGENGFKFSPVCCDMEAPADSAQDMQSSPHNQFTFRPLPPPPPPPHACTCARKPPPTVDSLQRRSMTTRSQPSPAAPAPPTSTQDSVHLHNSWVLNSNIPLETRHFLFKHGSGSSAIFSAASQNYPLTSNTVYSPPPRPLPRSTFSRPAFTFNKPYRCCNWKCTALSATAITVTLALLLAYVIAVHLFGLTWQLQPVGQIYANGISNGNPGTESMDTTYSPIGGRVSDKSEKKVFQKGRAIDTGEVDIGAQVMQTIPPGLFWRFQITIHHPIYLKFNISLAKDSLLGIYGRRNIPPTHTQFDFVKLMDGKQLVKQDSKSSDDIQHSPRNLILTSLQETGFIEYMDQGPWYLAFYNDGKKMEQVFVLTTAIEIMDDCSTNCNGNGECISGHCHCFPGFLGPDCARDSCPVLCGGNGEYEKGHCVCRNGWKGPECDVPEEQCIDPTCFGHGTCIMGVCICVPGYKGEICEEEDCLDPMCSSHGICVKGECHCSTGWGGVNCETPLPICQEQCSGHGTFLLDTGVCSCDPKWTGSDCSTELCTMECGSHGVCSRGICQCEEGWVGPTCEERSCHSHCAEHGQCKDGKCECSPGWEGDHCTIAHYLDAVRDGCPGLCFGNGRCTLDQNGWHCVCQVGWSGTGCNIVMEMLCGDNLDNDGDGLTDCVDPDCCQQSNCYVSPLCQGSPDPLDLIQQSQPLFSQHTSRLFYDRIKFLIGKDSTHVVPQDISFDSRRACVIRGQVVAVDGTPLVGVNVSFLHHSDYGFTISRQDGSFDLVAIGGISVVLIFDRSPFLSEKRTLWLPWNQFIVVEKVIMQRIVADAPSCDISNFISPNPIVLPSPLTSFGGSCPERGTIVPELQVVQEEIPIPSSFVRLSYLSSRTPGYKTLLRILLTHSTIPVGMIKVHLTVSVEGRLTQKWFPAAINLVYTFAWNKTDIYGQKVWGLAEALVSVGYEYEMCPEFILWEQRTVVLQGFEMDASNLGGWSLNKHHIFNPQSGIIHKGNGENMFISQQPPVIATIMGNGHQRSVACTNCNGPAHNNKLFAPVALASGPDGSVYVGDFNFVRRIFPSGNSVSILELRNRDTRHSTSPAHKYYLAMDPMSESLYLSDTNTRKVYKLKSLVETKDLSKNFEVVAGTGDQCLPFDQSHCGDGGKASEASLNSPRGITVDRHGFIYFVDGTMIRRIDENAVITTVIGSNGLTSTQPLSCDSGMDITQVRLEWPTDLAVNPMDNSLYVLDNNIVLQISENRRVRIIAGRPIHCQVPGIDHFLVSKVAIHSTLESARAISVSHSGLLFIAETDERKVNRIQQVTTNGEISIIAGAPTDCDCKIDPNCDCFSGDGGYAKDAKMKAPSSLAVSPDGTLYVADLGNVRIRTISKNQAHLNDMNLYEIASPADQELYQFTVNGTHLHTMNLITRDYVYNFTYNAEGDLGAITSSNGNSVHIRRDAGGMPLWLVVPGGQVYWLTISSNGVLKRVSAQGYNLALMTYPGNTGLLATKSNENGWTTVYEYDPEGHLTNATFPTGEVSSFHSDLEKLTKVALDTSNRENVLMSTNLTATSTIYILKQENTQSTYRVSPDGSLRVTFASGMEINLSSEPHILAGAVNPTLGKCNISLPGEHNANLIEWRQRKEQNKGNVSAFERRLRAHNRNLLSIDFDHMTRTGKIYDDHRKFTLRILYDQTGRPILWSPVSRYNEVNITYSPSGLVTFIQRGTWNEKMEYDQSGKIISRTWADGKIWSYTYLEKSVMLLLHSQRRYIFEYDQSDCLLSVTMPSMVRHSLQTMLSVGYYRNIYTPPDSSTSFIQDYSRDGRLLQTLHLGTGRRVLYKYTKQARLSEILYDTTQVTLTYEESSGVIKTIHLMHDGFICTIRYRQTGPLIGRQIFRFSEEGLVNARFDYSYNNFRVTSMQAVINETPLPIDLYRYVDVSGRTEQFGKFSVINYDLNQVITTTVMKHTKIFNANGQVIEVQYEILKAIAYWMTIQYDNMGRMVICDIRVGVDANITRYFYEYDADGQLQTVSVNDKIQWRYSYDLNGNINLLSHGNSARLTPLRYDLRDRITRLGEIQYKMDEDGFLRQRGNDIFEYNSNGLLQKAYNKVSGWTVQYYYDGLGRRVASKSSLGQHLQFFYADLANPIRVTHLYNHTSAEITSLYYDLQGHLIAMELSSGEEYYVACDNMGTPLAVFSSRGQVIKEILYTPYGDIYHDTYPDFEVIIGFHGGLYDFLTKLVHLGQRDYDVVAGRWTTPNHHIWKQLNLLPKPFNLYSFENNYPVGKIQDVAKYTTDIGTWLELFGFQLHNVLPGFPKPELENMELTYELLQLQTKTQEWDPGKMILGIQCELQKQLRNFISLDQLPMTPQYNEGRCLEGGKQPRFAAVPSVFGKGIKFAIKEGIVTADIIGVANEDSRRLAAILNNAHYLENLHFTIEGRDTHYFIKLGSLEEDLVLIGNTGGRRILENGVNVTVSQMTSVLNGRTRRFADIQLQHGALCFNIRYGTTVEEEKNHVLEMARQRAVAQAWTQEQRRLQEGEEGTRVWTEGEKQQLLGTGRVQGYDGYFVLSVEQYLELSDSANNIHFMRQSEIGRR.

The segment at 1–72 (MEQTDCKPYQ…KRKDVEKSTQ (72 aa)) is disordered. The 318-residue stretch at 1–318 (MEQTDCKPYQ…KPYRCCNWKC (318 aa)) folds into the Teneurin N-terminal domain. Topologically, residues 1–324 (MEQTDCKPYQ…NWKCTALSAT (324 aa)) are cytoplasmic. Residues 44–55 (ETLHEYNQELRR) show a composition bias toward basic and acidic residues. A Nuclear localization signal (NLS) motif is present at residues 62-65 (RKRK). Ser-105 is subject to Phosphoserine. Thr-109 carries the post-translational modification Phosphothreonine. A Phosphoserine modification is found at Ser-116. The disordered stretch occupies residues 175 to 241 (DSAQDMQSSP…PAPPTSTQDS (67 aa)). The span at 178–189 (QDMQSSPHNQFT) shows a compositional bias: polar residues. Positions 192–201 (PLPPPPPPPH) are enriched in pro residues. Over residues 214-224 (DSLQRRSMTTR) the composition is skewed to polar residues. The Required for interaction with SORBS1 (Ten-1 ICD form) motif lies at 290-297 (PPPRPLPR). Residues 325–345 (AITVTLALLLAYVIAVHLFGL) traverse the membrane as a helical segment. Topologically, residues 346–2731 (TWQLQPVGQI…FMRQSEIGRR (2386 aa)) are extracellular. Residue Asn-432 is glycosylated (N-linked (GlcNAc...) asparagine). EGF-like domains are found at residues 527 to 558 (IMDD…PDCA), 559 to 590 (RDSC…ECDV), 591 to 623 (PEEQ…EICE), 624 to 656 (EEDC…NCET), 657 to 690 (PLPI…SDCS), 691 to 720 (TELC…GPTC), 721 to 752 (EERS…DHCT), and 760 to 795 (VRDG…TGCN). Disulfide bonds link Cys-531-Cys-541, Cys-535-Cys-546, Cys-548-Cys-557, Cys-566-Cys-577, Cys-579-Cys-588, Cys-595-Cys-606, Cys-600-Cys-611, Cys-613-Cys-622, Cys-627-Cys-638, Cys-632-Cys-643, Cys-645-Cys-654, Cys-665-Cys-678, Cys-680-Cys-689, Cys-694-Cys-704, Cys-698-Cys-709, Cys-711-Cys-720, Cys-725-Cys-735, Cys-729-Cys-740, Cys-742-Cys-751, Cys-764-Cys-774, Cys-768-Cys-783, and Cys-785-Cys-794. N-linked (GlcNAc...) asparagine glycans are attached at residues Asn-904 and Asn-1083. 5 NHL repeats span residues 1193 to 1218 (LFAP…VRRI), 1298 to 1342 (SHCG…NAVI), 1357 to 1408 (LSCD…IAGR), 1420 to 1464 (FLVS…VTTN), and 1487 to 1530 (CFSG…ISKN). The YD 1 repeat unit spans residues 1540–1559 (YEIASPADQELYQFTVNGTH). Residues Asn-1556 and Asn-1573 are each glycosylated (N-linked (GlcNAc...) asparagine). YD repeat units lie at residues 1576–1596 (YNAE…VHIR), 1614–1638 (YWLT…ALMT), 1639–1660 (YPGN…TVYE), and 1661–1681 (YDPE…SSFH). Asn-1669, Asn-1705, Asn-1743, Asn-1763, Asn-1787, and Asn-1848 each carry an N-linked (GlcNAc...) asparagine glycan. YD repeat units follow at residues 1851-1870 (YSPS…EKME), 1871-1891 (YDQS…WSYT), 1892-1910 (YLEK…YIFE), 1911-1931 (YDQS…HSLQ), 1939-1955 (YRNI…FIQD), 1956-1975 (YSRD…RRVL), 1976-1995 (YKYT…TQVT), 1998-2018 (YEES…FICT), 2021-2041 (YRQT…EGLV), 2091-2111 (YDLN…FNAN), and 2119-2139 (YEIL…MGRM). A glycan (N-linked (GlcNAc...) asparagine) is linked at Asn-2151. YD repeat units lie at residues 2159–2179 (YDAD…WRYS), 2180–2200 (YDLN…LTPL), 2202–2222 (YDLR…DEDG), 2234–2254 (YNSN…TVQY), and 2256–2276 (YDGL…LQFF). Asn-2291 carries an N-linked (GlcNAc...) asparagine glycan. YD repeat units lie at residues 2302-2319 (YDLQ…GEEY) and 2320-2343 (YVAC…IKEI). Residue Ser-2586 is modified to Phosphoserine. N-linked (GlcNAc...) asparagine glycosylation occurs at Asn-2608.

This sequence belongs to the tenascin family. Teneurin subfamily. Homodimer; disulfide-linked. Heterodimer with either TENM2 or TENM3. May also form heterodimer with TENM4. Ten-1 ICD interacts with SORBS1 (via third SH3 domain). Interacts with MBD1 isoform 2. Ten-1 ICD interacts with HINT1. Post-translationally, once secreted, may also be cleaved to give rise to the TCAP-1 form. Derives from the plasma membrane form by proteolytic processing. Further proteolytic cleavage may generate 11.9 and 4.7 kDa bioactive peptides. In terms of tissue distribution, isoform 1 and isoform 2 are expressed in the brain. Isoform 2 is expressed in the granular layer of the dentate gyrus and the pyramidal layer (Py) of the CA1, CA2 and CA3 of the hippocampus (at protein level). Expressed in the cortex, thalamus, CA1, CA2, CA3, dentate gyrus and granular layer of the hippocampus. Weakly expressed in kidney, testis and lung.

It localises to the cell membrane. Its subcellular location is the cytoplasm. The protein localises to the secreted. It is found in the nucleus. The protein resides in the nucleus speckle. It localises to the nucleus matrix. Its subcellular location is the cytoskeleton. Functionally, involved in neural development, regulating the establishment of proper connectivity within the nervous system. May function as a cellular signal transducer. In terms of biological role, plays a role in the regulation of neuroplasticity in the limbic system. Mediates a rapid reorganization of actin- and tubulin-based cytoskeleton elements with an increase in dendritic arborization and spine density formation of neurons in the hippocampus and amygdala. Induces BDNF transcription inhibition in neurons. Activates the mitogen-activated protein (MAP) kinase 2 (MEK2) and extracellular signal-regulated kinase (ERK) cascade. Also acts as a bioactive neuroprotective peptide on limbic neurons of the brain and regulates stress-induced behavior: attenuates alkalosis-associated necrotic cell death and the effects of corticotropin-releasing factor (CRF) on c-fos/FOS induction and on the reinstatement of cocaine seeking. Induces gene transcription activation. The polypeptide is Teneurin-1 (Tenm1) (Mus musculus (Mouse)).